The sequence spans 232 residues: Phosphatidylserine decarboxylase proenzyme (232 aa).

The active-site Schiff-base intermediate with substrate; via pyruvic acid is the S190. S190 is subject to Pyruvic acid (Ser); by autocatalysis.

Belongs to the phosphatidylserine decarboxylase family. PSD-A subfamily. Heterodimer of a large membrane-associated beta subunit and a small pyruvoyl-containing alpha subunit. Requires pyruvate as cofactor. In terms of processing, is synthesized initially as an inactive proenzyme. Formation of the active enzyme involves a self-maturation process in which the active site pyruvoyl group is generated from an internal serine residue via an autocatalytic post-translational modification. Two non-identical subunits are generated from the proenzyme in this reaction, and the pyruvate is formed at the N-terminus of the alpha chain, which is derived from the carboxyl end of the proenzyme. The post-translation cleavage follows an unusual pathway, termed non-hydrolytic serinolysis, in which the side chain hydroxyl group of the serine supplies its oxygen atom to form the C-terminus of the beta chain, while the remainder of the serine residue undergoes an oxidative deamination to produce ammonia and the pyruvoyl prosthetic group on the alpha chain.

The protein localises to the cell membrane. The enzyme catalyses a 1,2-diacyl-sn-glycero-3-phospho-L-serine + H(+) = a 1,2-diacyl-sn-glycero-3-phosphoethanolamine + CO2. The protein operates within phospholipid metabolism; phosphatidylethanolamine biosynthesis; phosphatidylethanolamine from CDP-diacylglycerol: step 2/2. In terms of biological role, catalyzes the formation of phosphatidylethanolamine (PtdEtn) from phosphatidylserine (PtdSer). The polypeptide is Phosphatidylserine decarboxylase proenzyme (Brucella canis (strain ATCC 23365 / NCTC 10854 / RM-666)).